Consider the following 331-residue polypeptide: MSEIQSLTERALADVAAAQTPDQLEALRVALLGKSGSITAQLKQLGTLPADQRKAAGEAINLLRDALTAALAERKNTLETAALDARLAGERIDVTLPGRRSERGGLHPVTRTLERIVEIFARLGYELSDGPEIEDDWHNFEALNFPPHHPARAMHDTFYFGDGRLLRTHTSGVQVRYMDAHKPPLHMIAAGKVYRSDSDQTHSPMFHQLEGLLVDEHSTFADLKGTLSEFVRAFFERDFEMRFRPSYFPFVEPGAEVDIAWQQPDGSTRWLEVLGCGMVHPNVLRNVGIDPERYTGFAFGLGVERFAMLRYGVNDLRAFFENDVRFLRQFA.

Glutamate 252 contacts Mg(2+).

It belongs to the class-II aminoacyl-tRNA synthetase family. Phe-tRNA synthetase alpha subunit type 1 subfamily. Tetramer of two alpha and two beta subunits. Mg(2+) serves as cofactor.

It is found in the cytoplasm. It catalyses the reaction tRNA(Phe) + L-phenylalanine + ATP = L-phenylalanyl-tRNA(Phe) + AMP + diphosphate + H(+). The protein is Phenylalanine--tRNA ligase alpha subunit of Xanthomonas oryzae pv. oryzae (strain MAFF 311018).